The chain runs to 90 residues: uncharacterized protein (90 aa).

A helical membrane pass occupies residues 32–52; the sequence is IIINLIPLVLLFAFFCPCIYF.

It is found in the membrane. This is an uncharacterized protein from Schizosaccharomyces pombe (strain 972 / ATCC 24843) (Fission yeast).